A 529-amino-acid chain; its full sequence is Zinc finger protein 490 (529 aa).

Residues 1–53 (MRRNSSLSFQMERPLEEQVQSKWSSSQGRTGTGGSDVLQMQNSEHHGQSIKTQ) form a disordered region. The 76-residue stretch at 57–132 (ISLEDVAVNF…ALCENKEDCP (76 aa)) folds into the KRAB domain. 13 C2H2-type zinc fingers span residues 156–178 (CDCS…MRSH), 194–216 (HKCK…ERIH), 222–244 (YECK…IRIH), 250–272 (YECK…EKNH), 278–300 (YKCK…ERTH), 306–328 (YECK…EKTH), 334–356 (FVCR…VKTH), 362–384 (YTCK…ERTH), 390–412 (YECK…ERVH), 418–440 (YECK…ERTH), 446–468 (YECK…ERSH), 474–496 (CECK…KRIH), and 502–524 (FQCR…ERTH).

Belongs to the krueppel C2H2-type zinc-finger protein family.

It is found in the nucleus. May be involved in transcriptional regulation. The protein is Zinc finger protein 490 (ZNF490) of Homo sapiens (Human).